The primary structure comprises 294 residues: Tissue factor (294 aa).

Positions 1 to 28 are cleaved as a signal peptide; sequence MAILVRPRLLAALAPTFLGCLLLQVIAG. Residues 29-251 are Extracellular-facing; sequence AGIPEKAFNL…TEQWKSFLGE (223 aa). N-linked (GlcNAc...) asparagine glycans are attached at residues Asn-37 and Asn-57. A disulfide bond links Cys-75 and Cys-83. N-linked (GlcNAc...) asparagine glycosylation is found at Asn-169 and Asn-200. Cys-218 and Cys-241 are disulfide-bonded. The short motif at 245–247 is the WKS motif element; the sequence is WKS. The chain crosses the membrane as a helical span at residues 252–274; sequence TLIIVGAVVLLATIFIILLSISL. A lipid anchor (S-palmitoyl cysteine) is attached at Cys-275. The Cytoplasmic segment spans residues 275 to 294; that stretch reads CKRRKNRAGQKGKNTPSRLA.

This sequence belongs to the tissue factor family. As to quaternary structure, interacts with HSPE; the interaction, inhibited by heparin, promotes the generation of activated factor X and activates coagulation in the presence of activated factor VII.

Its subcellular location is the membrane. In terms of biological role, initiates blood coagulation by forming a complex with circulating factor VII or VIIa. The [TF:VIIa] complex activates factors IX or X by specific limited proteolysis. TF plays a role in normal hemostasis by initiating the cell-surface assembly and propagation of the coagulation protease cascade. In Mus musculus (Mouse), this protein is Tissue factor (F3).